The following is a 465-amino-acid chain: Probable M18 family aminopeptidase 1 (465 aa).

Residues His105, His180, and His441 each contribute to the Zn(2+) site.

It belongs to the peptidase M18 family. The cofactor is Zn(2+).

This chain is Probable M18 family aminopeptidase 1 (apeA), found in Clostridium acetobutylicum (strain ATCC 824 / DSM 792 / JCM 1419 / IAM 19013 / LMG 5710 / NBRC 13948 / NRRL B-527 / VKM B-1787 / 2291 / W).